A 338-amino-acid polypeptide reads, in one-letter code: Ketol-acid reductoisomerase (NADP(+)) (338 aa).

Positions 1–181 (MTVYYDKDCN…GGGRTAIIET (181 aa)) constitute a KARI N-terminal Rossmann domain. Residues 24-27 (FGSQ), R47, S52, and 82-85 (DENQ) contribute to the NADP(+) site. The active site involves H107. G133 is an NADP(+) binding site. The KARI C-terminal knotted domain occupies 182–327 (TFKDETETDL…VKLRTMMPWI (146 aa)). Mg(2+) contacts are provided by D190, E194, E226, and E230. Position 251 (S251) interacts with substrate.

It belongs to the ketol-acid reductoisomerase family. The cofactor is Mg(2+).

The enzyme catalyses (2R)-2,3-dihydroxy-3-methylbutanoate + NADP(+) = (2S)-2-acetolactate + NADPH + H(+). It catalyses the reaction (2R,3R)-2,3-dihydroxy-3-methylpentanoate + NADP(+) = (S)-2-ethyl-2-hydroxy-3-oxobutanoate + NADPH + H(+). The protein operates within amino-acid biosynthesis; L-isoleucine biosynthesis; L-isoleucine from 2-oxobutanoate: step 2/4. It participates in amino-acid biosynthesis; L-valine biosynthesis; L-valine from pyruvate: step 2/4. Its function is as follows. Involved in the biosynthesis of branched-chain amino acids (BCAA). Catalyzes an alkyl-migration followed by a ketol-acid reduction of (S)-2-acetolactate (S2AL) to yield (R)-2,3-dihydroxy-isovalerate. In the isomerase reaction, S2AL is rearranged via a Mg-dependent methyl migration to produce 3-hydroxy-3-methyl-2-ketobutyrate (HMKB). In the reductase reaction, this 2-ketoacid undergoes a metal-dependent reduction by NADPH to yield (R)-2,3-dihydroxy-isovalerate. The sequence is that of Ketol-acid reductoisomerase (NADP(+)) from Sulfurimonas denitrificans (strain ATCC 33889 / DSM 1251) (Thiomicrospira denitrificans (strain ATCC 33889 / DSM 1251)).